The sequence spans 356 residues: Phospho-N-acetylmuramoyl-pentapeptide-transferase (356 aa).

10 consecutive transmembrane segments (helical) span residues 25 to 45, 70 to 90, 93 to 113, 138 to 158, 164 to 184, 195 to 215, 235 to 255, 258 to 278, 284 to 304, and 333 to 353; these read TVAA…SIIA, GTPT…AFLW, LSNI…MIGF, FLIA…GLAL, YFIN…VGTG, GLAI…AYLS, LAVL…FNAP, AIFM…IVAV, IVLA…VIQV, and QVVI…LSTL.

The protein belongs to the glycosyltransferase 4 family. MraY subfamily. The cofactor is Mg(2+).

Its subcellular location is the cell inner membrane. The catalysed reaction is UDP-N-acetyl-alpha-D-muramoyl-L-alanyl-gamma-D-glutamyl-meso-2,6-diaminopimeloyl-D-alanyl-D-alanine + di-trans,octa-cis-undecaprenyl phosphate = di-trans,octa-cis-undecaprenyl diphospho-N-acetyl-alpha-D-muramoyl-L-alanyl-D-glutamyl-meso-2,6-diaminopimeloyl-D-alanyl-D-alanine + UMP. It participates in cell wall biogenesis; peptidoglycan biosynthesis. In terms of biological role, catalyzes the initial step of the lipid cycle reactions in the biosynthesis of the cell wall peptidoglycan: transfers peptidoglycan precursor phospho-MurNAc-pentapeptide from UDP-MurNAc-pentapeptide onto the lipid carrier undecaprenyl phosphate, yielding undecaprenyl-pyrophosphoryl-MurNAc-pentapeptide, known as lipid I. In Bartonella quintana (strain Toulouse) (Rochalimaea quintana), this protein is Phospho-N-acetylmuramoyl-pentapeptide-transferase.